The following is a 567-amino-acid chain: uncharacterized protein (567 aa).

The disordered stretch occupies residues 1–26 (MPSEKATTRHLPGAVETLSPRTGRRP). Helical transmembrane passes span 57-77 (AILVTNVIGLIVGAMLLTVAF), 90-110 (VSFGIVPGYCVLAFILGTYWL), 142-162 (VALAVLFLWGAAAALWTIIYG), 173-193 (LFSMGVIGVVAATSCYLLTEF), 221-241 (MLVWLLCSGVPNVGVALTAIF), and 257-277 (VLILWAPLLIFGFILMWILAW). An HAMP domain is found at 278–329 (LTATPVRVVREALNRVEQGDLSGDLVVFDGTELGELQRGFNRMVEGLRERER). Residues 361–485 (AVVFVDIVGS…EPVNEAARLC (125 aa)) form the Guanylate cyclase domain.

It belongs to the adenylyl cyclase class-3 family.

The protein localises to the cell membrane. This is an uncharacterized protein from Mycobacterium tuberculosis (strain ATCC 25618 / H37Rv).